Reading from the N-terminus, the 520-residue chain is GMP synthase [glutamine-hydrolyzing] (520 aa).

The Glutamine amidotransferase type-1 domain occupies 9-202 (TILIIDFGSQ…VHRIVGVKPG (194 aa)). The active-site Nucleophile is the Cys-86. Residues His-176 and Glu-178 contribute to the active site. The GMPS ATP-PPase domain occupies 203 to 395 (WTMGAYREQA…LGLPDSFIGR (193 aa)). ATP is bound at residue 230 to 236 (SGGVDSS).

In terms of assembly, homodimer.

It catalyses the reaction XMP + L-glutamine + ATP + H2O = GMP + L-glutamate + AMP + diphosphate + 2 H(+). Its pathway is purine metabolism; GMP biosynthesis; GMP from XMP (L-Gln route): step 1/1. Catalyzes the synthesis of GMP from XMP. The sequence is that of GMP synthase [glutamine-hydrolyzing] from Brucella canis (strain ATCC 23365 / NCTC 10854 / RM-666).